The sequence spans 247 residues: Adenosylcobinamide-GDP ribazoletransferase (247 aa).

Transmembrane regions (helical) follow at residues 34-54 (IITF…VFMV), 59-79 (CGAP…TGGF), 113-133 (GGLA…ELAL), 138-158 (ILAS…LLMY), and 194-214 (VLLP…AIFI).

It belongs to the CobS family. The cofactor is Mg(2+).

The protein resides in the cell inner membrane. It catalyses the reaction alpha-ribazole + adenosylcob(III)inamide-GDP = adenosylcob(III)alamin + GMP + H(+). The catalysed reaction is alpha-ribazole 5'-phosphate + adenosylcob(III)inamide-GDP = adenosylcob(III)alamin 5'-phosphate + GMP + H(+). It participates in cofactor biosynthesis; adenosylcobalamin biosynthesis; adenosylcobalamin from cob(II)yrinate a,c-diamide: step 7/7. In terms of biological role, joins adenosylcobinamide-GDP and alpha-ribazole to generate adenosylcobalamin (Ado-cobalamin). Also synthesizes adenosylcobalamin 5'-phosphate from adenosylcobinamide-GDP and alpha-ribazole 5'-phosphate. The polypeptide is Adenosylcobinamide-GDP ribazoletransferase (Escherichia coli O157:H7).